The following is a 615-amino-acid chain: uncharacterized protein (615 aa).

This sequence belongs to the NodU/CmcH family.

This is an uncharacterized protein from Synechocystis sp. (strain ATCC 27184 / PCC 6803 / Kazusa).